The primary structure comprises 829 residues: uncharacterized protein (829 aa).

It belongs to the IIV-6 050L family.

This is an uncharacterized protein from Invertebrate iridescent virus 3 (IIV-3).